The sequence spans 200 residues: Transgelin (200 aa).

Position 2 is an N-acetylalanine (alanine 2). The Calponin-homology (CH) domain occupies 24–137; sequence DELEDRLVEW…RTLVALGSLA (114 aa). The stretch at 175–199 is one Calponin-like repeat; sequence IGLQMGTNKGASQAGMSYGRPRQII.

It belongs to the calponin family. Monomer. Gizzard, uterus, intestine, esophagus, aorta, and trace amounts in brain, liver and heart.

The protein localises to the cytoplasm. Functionally, actin cross-linking/gelling protein. This Gallus gallus (Chicken) protein is Transgelin (TAGLN).